A 108-amino-acid polypeptide reads, in one-letter code: FK506-binding protein 1A (108 aa).

Residues 1 to 20 form a disordered region; sequence MGVEVQRISPGDGKNFPKPG. Residues 20–108 enclose the PPIase FKBP-type domain; the sequence is GDTVSIHYTG…TFEVELLKIN (89 aa).

Belongs to the FKBP-type PPIase family. FKBP1 subfamily.

The protein localises to the cytoplasm. It catalyses the reaction [protein]-peptidylproline (omega=180) = [protein]-peptidylproline (omega=0). With respect to regulation, inhibited by both FK506 and rapamycin. In terms of biological role, PPIases accelerate the folding of proteins. It catalyzes the cis-trans isomerization of proline imidic peptide bonds in oligopeptides. This is FK506-binding protein 1A (fprA) from Emericella nidulans (strain FGSC A4 / ATCC 38163 / CBS 112.46 / NRRL 194 / M139) (Aspergillus nidulans).